The chain runs to 87 residues: Probable acyl carrier protein PigG (87 aa).

The Carrier domain maps to 1-78; that stretch reads MLESKLINHI…SMVALVQRLK (78 aa). Ser-36 is subject to O-(pantetheine 4'-phosphoryl)serine.

The protein operates within antibiotic biosynthesis; prodigiosin biosynthesis. Its function is as follows. Involved in the biosynthesis of 4-methoxy-2,2'-bipyrrole-5-carbaldehyde (MBC), one of the terminal products involved in the biosynthesis of the red antibiotic prodigiosin (Pig). Carrier of the L-prolyl group transferred from L-prolyl-AMP by PigI. This Serratia sp. (strain ATCC 39006) (Prodigiosinella confusarubida) protein is Probable acyl carrier protein PigG.